The primary structure comprises 450 residues: Probable ECA polymerase (450 aa).

A run of 11 helical transmembrane segments spans residues 6–26, 37–57, 63–83, 118–138, 155–175, 181–201, 207–227, 228–248, 341–361, 378–398, and 410–430; these read FSGLFVVWLLCTLFIATLTWF, VFFSLLFLLTFFFGFPLTSVL, VGVAPPEILLQALLSAGCFYA, VILMGIALVSVGIFFMHNGFL, GVALKRFFYFFIPAMLVVYFL, AWLFFLVSTVAFGLLTYMIVG, IIIAFAIFLFIGIIRGWISLW, MLAAAGVLGIVGMFWLALKRY, LVVMGGALFIPLGAIVVGLII, YKAAILHSFCFGAIFNMIVLA, and VFFIVVFGACLMIAKLLYWLF.

This sequence belongs to the WzyE family. In terms of assembly, probably part of a complex composed of WzxE, WzyE and WzzE.

The protein localises to the cell inner membrane. It functions in the pathway bacterial outer membrane biogenesis; enterobacterial common antigen biosynthesis. Its function is as follows. Probably involved in the polymerization of enterobacterial common antigen (ECA) trisaccharide repeat units. This is Probable ECA polymerase from Shigella boydii serotype 18 (strain CDC 3083-94 / BS512).